The chain runs to 192 residues: Small ribosomal subunit protein uS5 (192 aa).

The S5 DRBM domain maps to 20 to 83 (FVDKLVHINR…EAAKRGLIRV (64 aa)). Residues 162–192 (SVAARRGLKVSALQARRRDADPADTSDAAVA) are disordered.

The protein belongs to the universal ribosomal protein uS5 family. As to quaternary structure, part of the 30S ribosomal subunit. Contacts proteins S4 and S8.

Its function is as follows. With S4 and S12 plays an important role in translational accuracy. In terms of biological role, located at the back of the 30S subunit body where it stabilizes the conformation of the head with respect to the body. This Methylorubrum populi (strain ATCC BAA-705 / NCIMB 13946 / BJ001) (Methylobacterium populi) protein is Small ribosomal subunit protein uS5.